The following is a 153-amino-acid chain: Regulatory protein RecX (153 aa).

The protein belongs to the RecX family.

The protein resides in the cytoplasm. Its function is as follows. Modulates RecA activity. The sequence is that of Regulatory protein RecX from Mannheimia succiniciproducens (strain KCTC 0769BP / MBEL55E).